The sequence spans 531 residues: Dihydropyrimidinase (531 aa).

H103, H105, and K193 together coordinate Zn(2+). K193 carries the post-translational modification N6-carboxylysine. Residue Y198 participates in substrate binding. Residues H226 and H282 each contribute to the Zn(2+) site. Substrate is bound at residue S332. Zn(2+) is bound at residue D359. Residue N380 coordinates substrate.

The protein belongs to the metallo-dependent hydrolases superfamily. Hydantoinase/dihydropyrimidinase family. In terms of assembly, homotetramer. The cofactor is Zn(2+). Post-translationally, carboxylation allows a single lysine to coordinate two zinc ions.

The protein localises to the endoplasmic reticulum. It carries out the reaction 5,6-dihydrouracil + H2O = 3-(carbamoylamino)propanoate + H(+). It functions in the pathway amino-acid biosynthesis; beta-alanine biosynthesis. Functionally, catalyzes the second step of the reductive pyrimidine degradation, the reversible hydrolytic ring opening of dihydropyrimidines. Can catalyze the ring opening of 5,6-dihydrouracil to N-carbamoyl-alanine and of 5,6-dihydrothymine to N-carbamoyl-amino isobutyrate. Involved in the recycling of nitrogen from nucleobases to general nitrogen metabolism. The protein is Dihydropyrimidinase of Arabidopsis thaliana (Mouse-ear cress).